We begin with the raw amino-acid sequence, 490 residues long: MEPEAGPVLYQKLRVWEPSLESEEEEEEISEQLILDASGPHDSSGNKAGRLPGAWAQLVAALLLLAIGFSLAVRQLCSSGASPGALGSGAPPASGHSHRPGVYHHGAIISPAAECSRLGRELFVAGGNIVDAGVGAALCLAVVHPHTTGLGATYWGLFHNSSSGNSTALTSGPAQTLAPGLGLPSALPALHMLHTHFGRLPWPHLLVGPISLAQKGFLVDTSLASALAAQDTKGLCPLLCHANGTPLGPGTQVTNTKLAAVLHKASLAPTPDLSGDALLSLLAEDLGLEGPSVGPRPTLEPALQLPLPQGILFTTPSPSAGPELLELLEASLQSAGPSPAPCPALPQAAAAPRSSVLATVDSSGSVLLLTSSLNSSFGSGHLSPSTGVLLSNLVAESAAGAWACPLIFRDISDDTEVDVLGLVASGTPAAARVMTHALLSHLARPQTPDQQGPTESPRACAQGTLLQVAAHTEHAHVSSVPSGCCPFQGF.

At 1–52 the chain is on the cytoplasmic side; it reads MEPEAGPVLYQKLRVWEPSLESEEEEEEISEQLILDASGPHDSSGNKAGRLP. Residues 53 to 73 form a helical; Signal-anchor for type II membrane protein membrane-spanning segment; that stretch reads GAWAQLVAALLLLAIGFSLAV. The Extracellular segment spans residues 74 to 490; that stretch reads RQLCSSGASP…PSGCCPFQGF (417 aa). 3 N-linked (GlcNAc...) asparagine glycosylation sites follow: N160, N165, and N374.

It belongs to the gamma-glutamyltransferase family. Heterodimer composed of the light and heavy chains. The active site is located in the light chain. Post-translationally, cleaved by autocatalysis into a large and a small subunit and the autocatalytic cleavage is essential to the functional activation of the enzyme.

Its subcellular location is the membrane. The catalysed reaction is an N-terminal (5-L-glutamyl)-[peptide] + an alpha-amino acid = 5-L-glutamyl amino acid + an N-terminal L-alpha-aminoacyl-[peptide]. It carries out the reaction glutathione + H2O = L-cysteinylglycine + L-glutamate. It catalyses the reaction an S-substituted glutathione + H2O = an S-substituted L-cysteinylglycine + L-glutamate. It functions in the pathway sulfur metabolism; glutathione metabolism. Hydrolyzes and transfers gamma-glutamyl moieties from glutathione and other gamma-glutamyl compounds to acceptors. The chain is Glutathione hydrolase 6 from Bos taurus (Bovine).